The sequence spans 312 residues: Putative pyridoxal kinase BUD16 (312 aa).

Residues Ser-9, Thr-44, and Tyr-122 each coordinate substrate. Residues 183-184 and 211-223 contribute to the ATP site; these read TS and RVPF…TGVG. Asp-224 serves as a coordination point for substrate.

The protein belongs to the pyridoxine kinase family. A divalent metal cation serves as cofactor.

The protein resides in the cytoplasm. It localises to the nucleus. It catalyses the reaction pyridoxal + ATP = pyridoxal 5'-phosphate + ADP + H(+). Functionally, required for synthesis of pyridoxal-5-phosphate from vitamin B6. Important for bud site selection. The sequence is that of Putative pyridoxal kinase BUD16 (BUD16) from Saccharomyces cerevisiae (strain ATCC 204508 / S288c) (Baker's yeast).